The chain runs to 418 residues: Thyroid hormone receptor alpha-A (418 aa).

A disordered region spans residues 1–38 (MDQNLSGLDCLSEPDEKRWPDGKRKRKNSQCMGKSGMS). A modulating region spans residues 1 to 60 (MDQNLSGLDCLSEPDEKRWPDGKRKRKNSQCMGKSGMSGDSLVSLPSAGYIPSYLDKDEP). 2 NR C4-type zinc fingers span residues 61 to 81 (CVVC…CEGC) and 99 to 123 (CKYD…FKKC). A DNA-binding region (nuclear receptor) is located at residues 61–135 (CVVCSDKATG…VGMAMDLVLD (75 aa)). Positions 171-415 (EEWELIRIVT…PPLFLEVFED (245 aa)) constitute an NR LBD domain.

It belongs to the nuclear hormone receptor family. NR1 subfamily. Binds to thyroid hormone receptor element (TRE) weakly as homodimers and monomers, but binds TRE with much higher affinity as heterodimers with retinoid X receptors. Can bind DNA as a heterodimer with either rxra or rxrg.

The protein resides in the nucleus. Its function is as follows. High affinity receptor for triiodothyronine (T3). The polypeptide is Thyroid hormone receptor alpha-A (thra-a) (Xenopus laevis (African clawed frog)).